A 434-amino-acid chain; its full sequence is 3-phosphoshikimate 1-carboxyvinyltransferase (434 aa).

Residues Lys15, Ser16, and Arg20 each contribute to the 3-phosphoshikimate site. Lys15 contributes to the phosphoenolpyruvate binding site. Phosphoenolpyruvate-binding residues include Gly96 and Arg124. Ser169, Gln171, Ser195, Asp319, and Lys346 together coordinate 3-phosphoshikimate. Gln171 serves as a coordination point for phosphoenolpyruvate. The active-site Proton acceptor is Asp319. Arg350 and Arg394 together coordinate phosphoenolpyruvate.

It belongs to the EPSP synthase family. As to quaternary structure, monomer.

The protein localises to the cytoplasm. It catalyses the reaction 3-phosphoshikimate + phosphoenolpyruvate = 5-O-(1-carboxyvinyl)-3-phosphoshikimate + phosphate. Its pathway is metabolic intermediate biosynthesis; chorismate biosynthesis; chorismate from D-erythrose 4-phosphate and phosphoenolpyruvate: step 6/7. Functionally, catalyzes the transfer of the enolpyruvyl moiety of phosphoenolpyruvate (PEP) to the 5-hydroxyl of shikimate-3-phosphate (S3P) to produce enolpyruvyl shikimate-3-phosphate and inorganic phosphate. This Prosthecochloris aestuarii (strain DSM 271 / SK 413) protein is 3-phosphoshikimate 1-carboxyvinyltransferase.